We begin with the raw amino-acid sequence, 219 residues long: uncharacterized protein (219 aa).

The tract at residues 42-71 (RQPRVVPVTSSDPEVVDDEDDEDQSDDSDE) is disordered. Over residues 45–54 (RVVPVTSSDP) the composition is skewed to low complexity. The segment covering 55–71 (EVVDDEDDEDQSDDSDE) has biased composition (acidic residues).

This is an uncharacterized protein from Dryophytes versicolor (chameleon treefrog).